Here is a 243-residue protein sequence, read N- to C-terminus: Trypsin (243 aa).

An N-terminal signal peptide occupies residues 1 to 15 (MKFLLLCVLLGAAAA). A propeptide spans 16-20 (FDDDK) (activation peptide). Residues 21 to 241 (IIGGATCAKS…YNAWIQNTIA (221 aa)) enclose the Peptidase S1 domain. Intrachain disulfides connect cysteine 27–cysteine 157, cysteine 45–cysteine 61, cysteine 129–cysteine 230, cysteine 136–cysteine 203, cysteine 168–cysteine 182, and cysteine 193–cysteine 217. Histidine 60 functions as the Charge relay system in the catalytic mechanism. Ca(2+)-binding residues include glutamate 72, asparagine 74, and glutamate 82. The active-site Charge relay system is the aspartate 104. Residue serine 197 is the Charge relay system of the active site.

The protein belongs to the peptidase S1 family. Requires Ca(2+) as cofactor.

The protein resides in the secreted. It is found in the extracellular space. The catalysed reaction is Preferential cleavage: Arg-|-Xaa, Lys-|-Xaa.. The polypeptide is Trypsin (Xenopus laevis (African clawed frog)).